The chain runs to 565 residues: NAD-dependent malic enzyme (565 aa).

Y104 serves as the catalytic Proton donor. R157 is a binding site for NAD(+). K175 (proton acceptor) is an active-site residue. Positions 246, 247, and 270 each coordinate a divalent metal cation. Residues D270 and N418 each contribute to the NAD(+) site.

It belongs to the malic enzymes family. In terms of assembly, homotetramer. Requires Mg(2+) as cofactor. The cofactor is Mn(2+).

It catalyses the reaction (S)-malate + NAD(+) = pyruvate + CO2 + NADH. The catalysed reaction is oxaloacetate + H(+) = pyruvate + CO2. This is NAD-dependent malic enzyme from Edwardsiella ictaluri (strain 93-146).